The primary structure comprises 331 residues: Ornithine carbamoyltransferase (331 aa).

Residues 55 to 58 (STRT), Q82, R106, and 133 to 136 (HPTQ) each bind carbamoyl phosphate. L-ornithine-binding positions include N166, D230, and 234-235 (SM). Residues 272 to 273 (CL) and R317 each bind carbamoyl phosphate.

The protein belongs to the aspartate/ornithine carbamoyltransferase superfamily. OTCase family.

It is found in the cytoplasm. It catalyses the reaction carbamoyl phosphate + L-ornithine = L-citrulline + phosphate + H(+). It participates in amino-acid biosynthesis; L-arginine biosynthesis; L-arginine from L-ornithine and carbamoyl phosphate: step 1/3. Functionally, reversibly catalyzes the transfer of the carbamoyl group from carbamoyl phosphate (CP) to the N(epsilon) atom of ornithine (ORN) to produce L-citrulline. In Neisseria meningitidis serogroup B (strain ATCC BAA-335 / MC58), this protein is Ornithine carbamoyltransferase (argF).